Reading from the N-terminus, the 228-residue chain is MKDVKALKLMTLNDVLSQINGDMTLGIGTGSTMELLLPQMAQLIKERGYNITGVCTSNKIAFLAKELGIKICEINDVDHIDLAIDGADEVDPSLNIIKGGGGALFREKVIDEMASRFVVVVDETKIVQYLGETFKLPVEVDKFNWYQILRKIESYADIKVERRVNEDVAFITDNGNYILDCKLPKGIDPYKFHEYLIHLTGVFETGYFLDMADQVIVGTQEGVKILEK.

Residues 29–32 (TGST), 85–88 (DGAD), and 98–101 (KGGG) each bind substrate. The Proton acceptor role is filled by E107. K125 contributes to the substrate binding site.

The protein belongs to the ribose 5-phosphate isomerase family. As to quaternary structure, homodimer.

It catalyses the reaction aldehydo-D-ribose 5-phosphate = D-ribulose 5-phosphate. It participates in carbohydrate degradation; pentose phosphate pathway; D-ribose 5-phosphate from D-ribulose 5-phosphate (non-oxidative stage): step 1/1. In terms of biological role, catalyzes the reversible conversion of ribose-5-phosphate to ribulose 5-phosphate. The polypeptide is Ribose-5-phosphate isomerase A (Staphylococcus aureus (strain COL)).